The sequence spans 274 residues: NH(3)-dependent NAD(+) synthetase (274 aa).

Gly46–Ser53 serves as a coordination point for ATP. Asp52 provides a ligand contact to Mg(2+). Position 140 (Arg140) interacts with deamido-NAD(+). Thr160 contacts ATP. Glu165 contacts Mg(2+). Deamido-NAD(+) is bound by residues Lys173 and Asp180. 2 residues coordinate ATP: Lys189 and Thr211. His260–Lys261 contributes to the deamido-NAD(+) binding site.

Belongs to the NAD synthetase family. Homodimer.

It catalyses the reaction deamido-NAD(+) + NH4(+) + ATP = AMP + diphosphate + NAD(+) + H(+). It participates in cofactor biosynthesis; NAD(+) biosynthesis; NAD(+) from deamido-NAD(+) (ammonia route): step 1/1. Its function is as follows. Catalyzes the ATP-dependent amidation of deamido-NAD to form NAD. Uses ammonia as a nitrogen source. The protein is NH(3)-dependent NAD(+) synthetase of Pectobacterium atrosepticum (strain SCRI 1043 / ATCC BAA-672) (Erwinia carotovora subsp. atroseptica).